Reading from the N-terminus, the 504-residue chain is D-alanine--D-alanyl carrier protein ligase (504 aa).

152-153 is an ATP binding site; sequence TS. Asp197 is a D-alanine binding site. Residue 292–297 coordinates ATP; the sequence is NTYGPT. Val301 is a D-alanine binding site. Residues Asp383, 394-397, and Lys492 contribute to the ATP site; that span reads YNGR. Lys492 serves as a coordination point for D-alanine.

This sequence belongs to the ATP-dependent AMP-binding enzyme family. DltA subfamily.

Its subcellular location is the cytoplasm. The catalysed reaction is holo-[D-alanyl-carrier protein] + D-alanine + ATP = D-alanyl-[D-alanyl-carrier protein] + AMP + diphosphate. It functions in the pathway cell wall biogenesis; lipoteichoic acid biosynthesis. Functionally, catalyzes the first step in the D-alanylation of lipoteichoic acid (LTA), the activation of D-alanine and its transfer onto the D-alanyl carrier protein (Dcp) DltC. In an ATP-dependent two-step reaction, forms a high energy D-alanyl-AMP intermediate, followed by transfer of the D-alanyl residue as a thiol ester to the phosphopantheinyl prosthetic group of the Dcp. D-alanylation of LTA plays an important role in modulating the properties of the cell wall in Gram-positive bacteria, influencing the net charge of the cell wall. The sequence is that of D-alanine--D-alanyl carrier protein ligase from Bacillus cereus (strain G9842).